Here is a 239-residue protein sequence, read N- to C-terminus: Putative antitoxin VapB45 (239 aa).

In terms of biological role, possibly the antitoxin component of a type II toxin-antitoxin (TA) system. Its cognate toxin is VapC45. The protein is Putative antitoxin VapB45 of Mycobacterium tuberculosis (strain ATCC 25618 / H37Rv).